Here is a 320-residue protein sequence, read N- to C-terminus: Short-chain dehydrogenase/reductase ARMGADRAFT_1169971 (320 aa).

Residues 19–39 form a helical membrane-spanning segment; sequence KVAVVTGANSGIGLYILFHVA. Residues I30, D78, N105, and K136 each coordinate NADP(+). N157 is a glycosylation site (N-linked (GlcNAc...) asparagine). The active-site Proton donor is S159. NADP(+) is bound by residues Y192, K196, V227, and S229. The Proton acceptor role is filled by Y192. The active-site Lowers pKa of active site Tyr is the K196. A helical membrane pass occupies residues 235–255; sequence LFTSLMFGTIINWVFSLFFIS.

It belongs to the short-chain dehydrogenases/reductases (SDR) family.

It is found in the membrane. The protein operates within secondary metabolite biosynthesis. Functionally, short-chain dehydrogenase/reductase, part of the gene cluster that mediates the biosynthesis of melleolides, a range of antifungal and phytotoxic polyketide derivatives composed of an orsellinic acid (OA) moiety esterified to various sesquiterpene alcohols. The first step in melleolides biosynthesis is performed by the delta(6)-protoilludene synthase PRO1 which catalyzes the cyclization of farnesyl diphosphate to protoilludene. The orsellinic acid synthase armB produces OA by condensing acetyl-CoA with 3 malonyl-CoA units in a three-round chain elongation reaction folowed by a C2-C7 ring closure. ArmB further catalyzes the trans-esterification of OA to the various sesquiterpene alcohols resulting from the hydroxylation of protoilludene. The melleolides cluster also includes 5 cytochrome P450 monooxygenases, 4 NAD(+)-dependent oxidoreductases, one flavin-dependent oxidoreductase, and one O-methyltransferase. The cytochrome P450 monooxygenases may be involved in protoilludene hydroxylation to elaborate melleolides with multiple alcohol groups, such as melleolide D, which carries alcohol functionalities at C-4, C-5, C-10, and C-13. The role of the NAD(+)-dependent enzymes remains unknown. Numerous melleolides, including arnamial, show 5'-O-methylation of the aromatic moiety which may be catalyzed by the methyltransferase encoded in the cluster. The flavin-dependent oxidoreductase might represent the dehydrogenase yielding the aldehyde in position 1 of arnamial and other melleolides. Finally, several halogenase localized outside of the cluster, are able to catalyze the transfer of a single chlorine atom to the melleolide backbone, resulting in a 6'-chloromelleolide product. The protein is Short-chain dehydrogenase/reductase ARMGADRAFT_1169971 of Armillaria gallica (Bulbous honey fungus).